Consider the following 256-residue polypeptide: Dioxygenase lolE1 (256 aa).

3 residues coordinate Fe cation: His-125, Asp-127, and His-203.

This sequence belongs to the PhyH family. In terms of assembly, homodimer. Fe cation is required as a cofactor.

It functions in the pathway alkaloid biosynthesis. Dioxygenase; part of the gene cluster that mediates the biosynthesis of loline alkaloids, potent insecticidal agents composed of a pyrrolizidine ring system and an uncommon ether bridge linking carbons 2 and 7. Lolines are structurally differentiated by the various modifications of the L-amino group and include norloline, loline, N-methylloline, N-acetylloline, N-acetylnorloline, and N-formylloline. The first committed step is the condensation of O-acetyl-L-homoserine (derived from L-aspartic acid) and L-proline, probably catalyzed by the gamma-type pyridoxal 5'-phosphate(PLP)-dependent enzyme lolC, to give the diamino diacid, NACPP. Ensuing cyclization, decarboxylation, and acetylation steps yield 1-exo-acetamidopyrrolizidine (AcAP). LolO is required for installation of the ether bridge upon the pathway intermediate, 1-exo-acetamidopyrrolizidine (AcAP). In sequential 2-oxoglutarate- and O(2)-consuming steps, lolO removes hydrogens from C2 and C7 of AcAP to form both carbon-oxygen bonds in N-acetylnorloline (NANL), the precursor to all other lolines. The enzymes lolD, lolE, lolF and lolT have also been proposed to be involved in the ether-bridge installation. Further processing of the exocyclic moiety of NANL by fungal N-acetamidase (LolN), methyltransferase (LolM), and cytochrome P450 (LolP) enzymes, with occasional involvement of a plant acetyltransferase, generates the other known lolines. LolN transforms NANL to norlonine which is monomethylated and dimethylated to respectively lonine and N-methyllonine (NML) by lolM. LolP catalyzes hydroxylation of the methyl group in N-methylloline (NML) and further oxygenation to N-formylloline (NFL). A plant acetyltransferase is responsible for the acetylation of loline to form N-acetylloline (NAL). LolA might interact with aspartate kinase to prevent feedback inhibition of its activity by these end products and thereby promote production of L-homoserine from L-aspartate. The sequence is that of Dioxygenase lolE1 from Epichloe uncinata (Endophyte fungus).